A 356-amino-acid polypeptide reads, in one-letter code: Glutamine synthetase cytosolic isozyme 2 (356 aa).

A GS beta-grasp domain is found at 19–99; that stretch reads IIAEYIWIGG…VMCDTYTPAG (81 aa). The GS catalytic domain occupies 106–356; that stretch reads KRHNAAKIFS…IAESTILWKP (251 aa).

The protein belongs to the glutamine synthetase family. As to quaternary structure, homooctamer.

The protein localises to the cytoplasm. The catalysed reaction is L-glutamate + NH4(+) + ATP = L-glutamine + ADP + phosphate + H(+). The protein is Glutamine synthetase cytosolic isozyme 2 (GS1-2) of Vitis vinifera (Grape).